A 155-amino-acid polypeptide reads, in one-letter code: Snaclec bothrojaracin subunit alpha (155 aa).

Residues methionine 1–alanine 23 form the signal peptide. 3 cysteine pairs are disulfide-bonded: cysteine 25–cysteine 36, cysteine 53–cysteine 150, and cysteine 125–cysteine 142. Positions histidine 32 to lysine 151 constitute a C-type lectin domain.

Belongs to the snaclec family. As to quaternary structure, heterodimer of subunits alpha and beta; disulfide-linked. In terms of tissue distribution, expressed by the venom gland.

It localises to the secreted. In terms of biological role, this potent antithrombotic agent acts in a calcium-independent manner. Exerts its anticoagulant effect by two distinct mechanisms. It binds to activated thrombin through exosite 1, blocking fibrinogen clotting, platelet activation, factor V activation and other effects, and it interacts with prothrombin (F2), decreasing its proteolytic activation -especially in the presence of factor Va. In vivo, intravenous injection before thrombosis induction causes a significant decrease in thrombus weight. Furthermore, BJC shows a prolonged effect by remaining in the plasma bound to prothrombin for at least 12 hours. This chain is Snaclec bothrojaracin subunit alpha, found in Bothrops jararaca (Jararaca).